The following is a 143-amino-acid chain: Transcriptional regulator MraZ (143 aa).

SpoVT-AbrB domains follow at residues 5 to 47 (TFTP…PRNV) and 76 to 119 (ADEQ…NAES).

The protein belongs to the MraZ family. Forms oligomers.

It is found in the cytoplasm. Its subcellular location is the nucleoid. This Corynebacterium kroppenstedtii (strain DSM 44385 / JCM 11950 / CIP 105744 / CCUG 35717) protein is Transcriptional regulator MraZ.